Consider the following 371-residue polypeptide: MAELQEVQITEEKPLLPGQTPETAKEAELAARILLDQGQTHSVETPYGSVTFTVYGTPKPKRPAIFTYHDVGLNYKSCFQPLFRFGDMQEIIQNFVRVHVDAPGMEEGAPVFPLGYQYPSLDQLADMIPCILQYLNFSTIIGVGVGAGAYILSRYALNHPDTVEGLVLINIDPNAKGWMDWAAHKLTGLTSSIPDMILGHLFSQEELSGNSELIQKYRGIIQHAPNLENIELYWNSYNNRRDLNFERGGETTLKCPVMLVVGDQAPHEDAVVECNSKLDPTQTSFLKMADSGGQPQLTQPGKLTEAFKYFLQGMGYMASSCMTRLSRSRTASLTSAASIDGSRSRSRTLSQSSESGTLPSGPPGHTMEVSC.

The tract at residues 1 to 22 is disordered; the sequence is MAELQEVQITEEKPLLPGQTPE. A2 is modified (N-acetylalanine). T20 is subject to Phosphothreonine. Phosphoserine occurs at positions 326 and 328. T330 carries the post-translational modification Phosphothreonine; by SGK1. S332 carries the phosphoserine; by PKC/PRKCQ or SGK1 modification. T334 is subject to Phosphothreonine. Positions 334–371 are disordered; that stretch reads TSAASIDGSRSRSRTLSQSSESGTLPSGPPGHTMEVSC. S335, S338, and S344 each carry phosphoserine. A Phosphothreonine; by PKB/AKT1 or SGK1 modification is found at T348. S350, S352, S353, and S355 each carry phosphoserine. T357 carries the post-translational modification Phosphothreonine. The residue at position 370 (S370) is a Phosphoserine.

The protein belongs to the NDRG family. As to quaternary structure, interacts with CTNNB1. In terms of tissue distribution, expressed at highest levels in brain, heart and liver, and at lower levels in kidney, colon, skeletal muscle, adrenal gland, ovary and uterus (at protein level).

It localises to the cytoplasm. The protein resides in the perinuclear region. Its subcellular location is the cell projection. It is found in the growth cone. Contributes to the regulation of the Wnt signaling pathway. Down-regulates CTNNB1-mediated transcriptional activation of target genes, such as CCND1, and may thereby act as tumor suppressor. May be involved in dendritic cell and neuron differentiation. This is Protein NDRG2 (Ndrg2) from Mus musculus (Mouse).